The following is a 524-amino-acid chain: FAD-dependent monooxygenase opdD (524 aa).

Residues Glu48 and Arg145 each contribute to the FAD site.

The protein belongs to the paxM FAD-dependent monooxygenase family.

It participates in secondary metabolite biosynthesis. Functionally, FAD-dependent monooxygenase; part of the gene cluster that mediates the biosynthesis of oxopyrrolidines, polyketide-amino acid hybrid compounds with feature structures of tetramic acid. Does not seem to play a role in oxopyrrolidines A and B biosynthesis. May be involved in further modifications of these oxopyrrolidines. In Penicillium oxalicum (strain 114-2 / CGMCC 5302) (Penicillium decumbens), this protein is FAD-dependent monooxygenase opdD.